A 442-amino-acid chain; its full sequence is Ribosome biogenesis protein NOP53 (442 aa).

Residues 242–264 form a disordered region; it reads KPSSNTNLKKIEDKTPRQAQKSV.

Belongs to the NOP53 family.

It is found in the nucleus. The protein resides in the nucleolus. Its subcellular location is the nucleoplasm. May play a role in ribosome biogenesis. This chain is Ribosome biogenesis protein NOP53, found in Arabidopsis thaliana (Mouse-ear cress).